A 519-amino-acid chain; its full sequence is Exodeoxyribonuclease 7 large subunit (519 aa).

The tract at residues 500–519 (VGRGKTRKPKEEPPAQGSLL) is disordered.

This sequence belongs to the XseA family. In terms of assembly, heterooligomer composed of large and small subunits.

The protein localises to the cytoplasm. It carries out the reaction Exonucleolytic cleavage in either 5'- to 3'- or 3'- to 5'-direction to yield nucleoside 5'-phosphates.. In terms of biological role, bidirectionally degrades single-stranded DNA into large acid-insoluble oligonucleotides, which are then degraded further into small acid-soluble oligonucleotides. This chain is Exodeoxyribonuclease 7 large subunit, found in Cereibacter sphaeroides (strain KD131 / KCTC 12085) (Rhodobacter sphaeroides).